Here is a 493-residue protein sequence, read N- to C-terminus: Glutamyl-tRNA(Gln) amidotransferase subunit A (493 aa).

Active-site charge relay system residues include Lys78 and Ser158. Ser182 (acyl-ester intermediate) is an active-site residue.

This sequence belongs to the amidase family. GatA subfamily. As to quaternary structure, heterotrimer of A, B and C subunits.

The enzyme catalyses L-glutamyl-tRNA(Gln) + L-glutamine + ATP + H2O = L-glutaminyl-tRNA(Gln) + L-glutamate + ADP + phosphate + H(+). Its function is as follows. Allows the formation of correctly charged Gln-tRNA(Gln) through the transamidation of misacylated Glu-tRNA(Gln) in organisms which lack glutaminyl-tRNA synthetase. The reaction takes place in the presence of glutamine and ATP through an activated gamma-phospho-Glu-tRNA(Gln). This Methylocella silvestris (strain DSM 15510 / CIP 108128 / LMG 27833 / NCIMB 13906 / BL2) protein is Glutamyl-tRNA(Gln) amidotransferase subunit A.